Consider the following 431-residue polypeptide: Anaerobic glycerol-3-phosphate dehydrogenase subunit B (431 aa).

Belongs to the anaerobic G-3-P dehydrogenase subunit B family. Composed of a catalytic GlpA/B dimer and of membrane bound GlpC. FMN is required as a cofactor.

The catalysed reaction is a quinone + sn-glycerol 3-phosphate = dihydroxyacetone phosphate + a quinol. It participates in polyol metabolism; glycerol degradation via glycerol kinase pathway; glycerone phosphate from sn-glycerol 3-phosphate (anaerobic route): step 1/1. Functionally, conversion of glycerol 3-phosphate to dihydroxyacetone. Uses fumarate or nitrate as electron acceptor. The sequence is that of Anaerobic glycerol-3-phosphate dehydrogenase subunit B from Mannheimia succiniciproducens (strain KCTC 0769BP / MBEL55E).